The sequence spans 212 residues: Adenylate kinase (212 aa).

10-15 (GAGKGT) contacts ATP. Residues 30–59 (ALGDIFRTIIKTSTSEAELINNYVKQGELV) are NMP. AMP-binding positions include R36, 57–59 (ELV), 85–88 (GYPR), and Q92. Positions 122–160 (GRYSCKNCRKIYNSYFLQPKTDNVCDVCGSSTFDYRKDD) are LID. R123 provides a ligand contact to ATP. C126 and C129 together coordinate Zn(2+). Residue 132-133 (IY) coordinates ATP. C146 and C149 together coordinate Zn(2+). The AMP site is built by R157 and R168. K196 contributes to the ATP binding site.

The protein belongs to the adenylate kinase family. Monomer.

It is found in the cytoplasm. It carries out the reaction AMP + ATP = 2 ADP. Its pathway is purine metabolism; AMP biosynthesis via salvage pathway; AMP from ADP: step 1/1. Catalyzes the reversible transfer of the terminal phosphate group between ATP and AMP. Plays an important role in cellular energy homeostasis and in adenine nucleotide metabolism. This chain is Adenylate kinase, found in Rickettsia akari (strain Hartford).